The chain runs to 363 residues: UDP-N-acetylglucosamine--N-acetylmuramyl-(pentapeptide) pyrophosphoryl-undecaprenol N-acetylglucosamine transferase (363 aa).

UDP-N-acetyl-alpha-D-glucosamine contacts are provided by residues threonine 12–glycine 14, arginine 166, serine 196, and glutamine 291.

The protein belongs to the glycosyltransferase 28 family. MurG subfamily.

The protein localises to the cell inner membrane. It carries out the reaction di-trans,octa-cis-undecaprenyl diphospho-N-acetyl-alpha-D-muramoyl-L-alanyl-D-glutamyl-meso-2,6-diaminopimeloyl-D-alanyl-D-alanine + UDP-N-acetyl-alpha-D-glucosamine = di-trans,octa-cis-undecaprenyl diphospho-[N-acetyl-alpha-D-glucosaminyl-(1-&gt;4)]-N-acetyl-alpha-D-muramoyl-L-alanyl-D-glutamyl-meso-2,6-diaminopimeloyl-D-alanyl-D-alanine + UDP + H(+). The protein operates within cell wall biogenesis; peptidoglycan biosynthesis. Cell wall formation. Catalyzes the transfer of a GlcNAc subunit on undecaprenyl-pyrophosphoryl-MurNAc-pentapeptide (lipid intermediate I) to form undecaprenyl-pyrophosphoryl-MurNAc-(pentapeptide)GlcNAc (lipid intermediate II). The polypeptide is UDP-N-acetylglucosamine--N-acetylmuramyl-(pentapeptide) pyrophosphoryl-undecaprenol N-acetylglucosamine transferase (Legionella pneumophila (strain Lens)).